The primary structure comprises 262 residues: MLALEAAQLDGPHFSCLYPDGVFYDLDSCKHSSYPDSEGAPDSLWDWTVAPPVPATPYEAFDPAAAAFSHPQAAQLCYEPPTYSPAGNLELAPSLEAPGPGLPAYPTENFASQTLVPPAYAPYPSPVLSEEEDLPLDSPALEVSDSESDEALVAGPEGKGSEAGTRKKLRLYQFLLGLLTRGDMRECVWWVEPGAGVFQFSSKHKELLARRWGQQKGNRKRMTYQKLARALRNYAKTGEIRKVKRKLTYQFDSALLPAVRRA.

The interval 1–31 is TAD1 (Acidic); it reads MLALEAAQLDGPHFSCLYPDGVFYDLDSCKH. The TAD2 stretch occupies residues 41–61; that stretch reads PDSLWDWTVAPPVPATPYEAF. Positions 140–163 are disordered; that stretch reads ALEVSDSESDEALVAGPEGKGSEA. Residues 169–252 constitute a DNA-binding region (ETS); sequence LRLYQFLLGL…VKRKLTYQFD (84 aa).

The protein belongs to the ETS family. As to quaternary structure, can form homotypic interactions. Interacts with IRF4/Pip. Interacts with JUN. Interacts with TBP. May also interact with CREBBP and EP300. Interacts with NONO/p54(nrb). Expressed in plasmacytoid dendritic cells (pDCs) and B-cells, not expressed in T-cells or granulocytes. May also be enriched in stem cell populations of the liver.

The protein localises to the nucleus. The protein resides in the cytoplasm. In terms of biological role, sequence specific transcriptional activator which binds to the PU-box, a purine-rich DNA sequence (5'-GAGGAA-3') that can act as a lymphoid-specific enhancer. Promotes development of plasmacytoid dendritic cells (pDCs), also known as type 2 DC precursors (pre-DC2) or natural interferon (IFN)-producing cells. These cells have the capacity to produce large amounts of interferon and block viral replication. May be required for B-cell receptor (BCR) signaling, which is necessary for normal B-cell development and antigenic stimulation. The polypeptide is Transcription factor Spi-B (SPIB) (Homo sapiens (Human)).